The chain runs to 197 residues: NADH-quinone oxidoreductase subunit C (197 aa).

This sequence belongs to the complex I 30 kDa subunit family. In terms of assembly, NDH-1 is composed of 14 different subunits. Subunits NuoB, C, D, E, F, and G constitute the peripheral sector of the complex.

The protein resides in the cell inner membrane. The catalysed reaction is a quinone + NADH + 5 H(+)(in) = a quinol + NAD(+) + 4 H(+)(out). NDH-1 shuttles electrons from NADH, via FMN and iron-sulfur (Fe-S) centers, to quinones in the respiratory chain. The immediate electron acceptor for the enzyme in this species is believed to be ubiquinone. Couples the redox reaction to proton translocation (for every two electrons transferred, four hydrogen ions are translocated across the cytoplasmic membrane), and thus conserves the redox energy in a proton gradient. The protein is NADH-quinone oxidoreductase subunit C of Neisseria meningitidis serogroup A / serotype 4A (strain DSM 15465 / Z2491).